We begin with the raw amino-acid sequence, 562 residues long: Long-chain-fatty-acid--CoA ligase (562 aa).

It belongs to the ATP-dependent AMP-binding enzyme family. It depends on Mg(2+) as a cofactor.

The protein resides in the membrane. The catalysed reaction is a long-chain fatty acid + ATP + CoA = a long-chain fatty acyl-CoA + AMP + diphosphate. It functions in the pathway lipid metabolism; fatty acid beta-oxidation. In terms of biological role, catalyzes the esterification, concomitant with transport, of exogenous long-chain fatty acids into metabolically active CoA thioesters for subsequent degradation or incorporation into phospholipids. The chain is Long-chain-fatty-acid--CoA ligase (fadD) from Haemophilus influenzae (strain ATCC 51907 / DSM 11121 / KW20 / Rd).